The sequence spans 407 residues: 1-deoxy-D-xylulose 5-phosphate reductoisomerase (407 aa).

Thr25, Gly26, Ser27, Ile28, Asn53, and Asn136 together coordinate NADPH. Position 137 (Lys137) interacts with 1-deoxy-D-xylulose 5-phosphate. Residue Glu138 participates in NADPH binding. Asp162 serves as a coordination point for Mn(2+). 1-deoxy-D-xylulose 5-phosphate is bound by residues Ser163, Glu164, Ser188, and His211. Mn(2+) is bound at residue Glu164. Gly217 serves as a coordination point for NADPH. 1-deoxy-D-xylulose 5-phosphate is bound by residues Ser224, Asn229, Lys230, and Glu233. Glu233 contributes to the Mn(2+) binding site.

It belongs to the DXR family. Mg(2+) is required as a cofactor. Requires Mn(2+) as cofactor.

It carries out the reaction 2-C-methyl-D-erythritol 4-phosphate + NADP(+) = 1-deoxy-D-xylulose 5-phosphate + NADPH + H(+). It functions in the pathway isoprenoid biosynthesis; isopentenyl diphosphate biosynthesis via DXP pathway; isopentenyl diphosphate from 1-deoxy-D-xylulose 5-phosphate: step 1/6. Functionally, catalyzes the NADPH-dependent rearrangement and reduction of 1-deoxy-D-xylulose-5-phosphate (DXP) to 2-C-methyl-D-erythritol 4-phosphate (MEP). This Rhodopseudomonas palustris (strain BisB5) protein is 1-deoxy-D-xylulose 5-phosphate reductoisomerase.